The primary structure comprises 148 residues: Large-conductance mechanosensitive channel (148 aa).

2 helical membrane-spanning segments follow: residues 16 to 36 (VMDL…VNSI) and 89 to 109 (GSFI…FLMV).

It belongs to the MscL family. As to quaternary structure, homopentamer.

It is found in the cell inner membrane. In terms of biological role, channel that opens in response to stretch forces in the membrane lipid bilayer. May participate in the regulation of osmotic pressure changes within the cell. This Paraburkholderia phytofirmans (strain DSM 17436 / LMG 22146 / PsJN) (Burkholderia phytofirmans) protein is Large-conductance mechanosensitive channel.